Reading from the N-terminus, the 358-residue chain is Probable isocitrate dehydrogenase [NAD] subunit alpha, mitochondrial (358 aa).

The substrate site is built by Arg108, Arg118, Arg139, and Asp226. Mg(2+) contacts are provided by Asp226, Asp250, and Asp254.

The protein belongs to the isocitrate and isopropylmalate dehydrogenases family. Heterooligomer of subunits alpha, beta, and gamma in the apparent ratio of 2:1:1. The cofactor is Mg(2+). It depends on Mn(2+) as a cofactor.

The protein resides in the mitochondrion. The catalysed reaction is D-threo-isocitrate + NAD(+) = 2-oxoglutarate + CO2 + NADH. The chain is Probable isocitrate dehydrogenase [NAD] subunit alpha, mitochondrial (idha-1) from Caenorhabditis elegans.